The chain runs to 382 residues: Norsolorinic acid reductase B (382 aa).

Asp64 lines the NADP(+) pocket. Tyr69 acts as the Proton donor in catalysis. His143 is a binding site for substrate. NADP(+)-binding positions include 173-174 (SD), Gln199, 228-238 (GVLNQGRFRTE), and 302-310 (RKVDHLTGV).

It belongs to the aldo/keto reductase family. Aldo/keto reductase 2 subfamily.

The protein operates within mycotoxin biosynthesis; aflatoxin biosynthesis. In terms of biological role, norsolorinic acid reductase; part of the gene cluster that mediates the biosynthesis of aflatoxins, a group of polyketide-derived furanocoumarins, and part of the most toxic and carcinogenic compounds among the known mycotoxins. The four major aflatoxins produced by A.parasiticus are aflatoxin B1 (AFB1), aflatoxin B2 (AFB2), aflatoxin G1 (AFG1) and aflatoxin G2 (AFG2). Within the aflatoxin pathway, the norsolorinic acid reductase aflE may play a role in the conversion of norsolorinic acid (NOR) to averantin (AVN). The biosynthesis of aflatoxins begins with the norsolorinic acid synthase aflC that combines a hexanoyl starter unit produced by the fatty acid synthase aflA/aflB and 7 malonyl-CoA extender units to synthesize the precursor NOR. The second step is the conversion of NOR to averantin and requires the norsolorinic acid ketoreductase aflD, which catalyzes the dehydration of norsolorinic acid to form (1'S)-averantin. The norsolorinic acid reductases aflE and aflF may also play a role in the conversion of NOR to AVN. The cytochrome P450 monooxygenase aflG then catalyzes the hydroxylation of AVN to 5'hydroxyaverantin (HAVN). The next step is performed by the 5'-hydroxyaverantin dehydrogenase aflH that transforms HAVN to 5'-oxoaverantin (OAVN) which is further converted to averufin (AVF) by aflK that plays a dual role in the pathway, as a 5'-oxoaverantin cyclase that mediates conversion of 5'-oxoaverantin, as well as a versicolorin B synthase in a later step in the pathway. The averufin oxidase aflI catalyzes the conversion of AVF to versiconal hemiacetal acetate (VHA). VHA is then the substrate for the versiconal hemiacetal acetate esterase aflJ to yield versiconal (VAL). Versicolorin B synthase aflK then converts VAL to versicolorin B (VERB) by closing the bisfuran ring of aflatoxin which is required for DNA-binding, thus giving to aflatoxin its activity as a mutagen. Then, the activity of the versicolorin B desaturase aflL leads to versicolorin A (VERA). A branch point starts from VERB since it can also be converted to dihydrodemethylsterigmatocystin (DMDHST), probably also by aflL, VERA being a precursor for aflatoxins B1 and G1, and DMDHST for aflatoxins B2 and G2. Next, the versicolorin reductase aflM and the cytochrome P450 monooxygenase aflN are involved in conversion of VERA to demethylsterigmatocystin (DMST). AflX and aflY seem also involved in this step, through probable aflX-mediated epoxide ring-opening step following versicolorin A oxidation and aflY-mediated Baeyer-Villiger oxidation required for the formation of the xanthone ring. The methyltransferase aflO then leads to the modification of DMST to sterigmatocystin (ST), and of DMDHST to dihydrosterigmatocystin (DHST). Both ST and DHST are then substrates of the O-methyltransferase aflP to yield O-methylsterigmatocystin (OMST) and dihydro-O-methylsterigmatocystin (DHOMST), respectively. Finally OMST is converted to aflatoxins B1 and G1, and DHOMST to aflatoxins B2 and G2, via the action of several enzymes including O-methylsterigmatocystin oxidoreductase aflQ, the cytochrome P450 monooxygenase aflU, but also the NADH-dependent flavin oxidoreductase nadA which is specifically required for the synthesis of AFG1. This chain is Norsolorinic acid reductase B, found in Aspergillus parasiticus (strain ATCC 56775 / NRRL 5862 / SRRC 143 / SU-1).